The chain runs to 138 residues: Cellular retinoic acid-binding protein 2 (138 aa).

The Nuclear localization signal signature appears at 21 to 31; that stretch reads KVLGVNVMLRK. Residue Lys-102 forms a Glycyl lysine isopeptide (Lys-Gly) (interchain with G-Cter in SUMO) linkage. 133–135 is a binding site for all-trans-retinoate; sequence RVY.

The protein belongs to the calycin superfamily. Fatty-acid binding protein (FABP) family. Interacts with RXR and RARA. Interacts with importin alpha. In terms of processing, sumoylated in response to retinoic acid binding, sumoylation is critical for dissociation from ER and subsequent nuclear translocation.

It localises to the cytoplasm. Its subcellular location is the endoplasmic reticulum. The protein resides in the nucleus. In terms of biological role, transports retinoic acid to the nucleus. Regulates the access of retinoic acid to the nuclear retinoic acid receptors. This chain is Cellular retinoic acid-binding protein 2 (CRABP2), found in Homo sapiens (Human).